Here is a 185-residue protein sequence, read N- to C-terminus: Tumor necrosis factor receptor superfamily member 17 (185 aa).

The Extracellular segment spans residues 1–49 (MAQQCFHSEYFDSLLHACKPCHLRCSNPPATCQPYCDPSVTSSVKGTYT). Residues 4 to 36 (QCFHSEYFDSLLHACKPCHLRCSNPPATCQPYC) form a TNFR-Cys repeat. 3 disulfides stabilise this stretch: Cys-5-Cys-18, Cys-21-Cys-32, and Cys-25-Cys-36. The chain crosses the membrane as a helical; Signal-anchor for type III membrane protein span at residues 50–70 (VLWIFLGLTLVLSLALFTISF). Residues 71 to 185 (LLRKMNPEAL…MGMEKPTHTR (115 aa)) are Cytoplasmic-facing.

As to quaternary structure, associates with TRAF1, TRAF2, TRAF3, TRAF5 and TRAF6. As to expression, detected in spleen, thymus, bone marrow and heart, and at lower levels in kidney and lung.

Its subcellular location is the membrane. Its function is as follows. Receptor for TNFSF13B/BLyS/BAFF and TNFSF13/APRIL. Promotes B-cell survival and plays a role in the regulation of humoral immunity. Activates NF-kappa-B and JNK. This chain is Tumor necrosis factor receptor superfamily member 17 (Tnfrsf17), found in Mus musculus (Mouse).